The chain runs to 648 residues: L-aspartate oxidase 2-b, chloroplastic (648 aa).

FAD is bound by residues Ser-98 to Ala-101, Lys-120, Ser-127 to Gly-134, and Asp-298. The active-site Proton donor/acceptor is the Arg-373. FAD is bound by residues Glu-458 and Ser-474–Leu-475.

This sequence belongs to the FAD-dependent oxidoreductase 2 family. NadB subfamily. Requires FAD as cofactor.

It localises to the plastid. It is found in the chloroplast. The catalysed reaction is L-aspartate + O2 = iminosuccinate + H2O2. Its pathway is alkaloid biosynthesis; nicotine biosynthesis. It participates in cofactor biosynthesis; NAD(+) biosynthesis; iminoaspartate from L-aspartate (oxidase route): step 1/1. Involved in the biosynthesis of pyridine alkaloid natural products, leading mainly to the production of anabasine, anatabine, nicotine and nornicotine, effective deterrents against herbivores with antiparasitic and pesticide properties (neurotoxins); nornicotine serves as the precursor in the synthesis of the carcinogen compound N'-nitrosonornicotine (NNN). Catalyzes the oxidation of L-aspartate to iminoaspartate. In Nicotiana tabacum (Common tobacco), this protein is L-aspartate oxidase 2-b, chloroplastic.